The primary structure comprises 142 residues: Large ribosomal subunit protein uL22c (142 aa).

Belongs to the universal ribosomal protein uL22 family. In terms of assembly, part of the 50S ribosomal subunit.

It localises to the plastid. Its subcellular location is the chloroplast. In terms of biological role, this protein binds specifically to 23S rRNA. Functionally, the globular domain of the protein is located near the polypeptide exit tunnel on the outside of the subunit, while an extended beta-hairpin is found that lines the wall of the exit tunnel in the center of the 70S ribosome. The polypeptide is Large ribosomal subunit protein uL22c (rpl22) (Ceratophyllum demersum (Rigid hornwort)).